We begin with the raw amino-acid sequence, 1368 residues long: DNA-directed RNA polymerase subunit beta (1368 aa).

Belongs to the RNA polymerase beta chain family. In terms of assembly, the RNAP catalytic core consists of 2 alpha, 1 beta, 1 beta' and 1 omega subunit. When a sigma factor is associated with the core the holoenzyme is formed, which can initiate transcription.

It carries out the reaction RNA(n) + a ribonucleoside 5'-triphosphate = RNA(n+1) + diphosphate. DNA-dependent RNA polymerase catalyzes the transcription of DNA into RNA using the four ribonucleoside triphosphates as substrates. This Burkholderia mallei (strain SAVP1) protein is DNA-directed RNA polymerase subunit beta.